The sequence spans 532 residues: Aspartate--tRNA ligase 1, cytoplasmic (532 aa).

Residues Leu-7–Ser-41 are a coiled coil. A disordered region spans residues Arg-31–Asp-58. The OB DNA-binding region spans Val-88–Tyr-169. Glu-260 provides a ligand contact to L-aspartate. Residues Gln-282–Lys-285 form an aspartate region. An L-aspartate-binding site is contributed by Arg-304. ATP contacts are provided by residues Arg-304–Glu-306, Arg-312–Leu-314, and Glu-455. Residues Glu-455 and Ser-458 each coordinate Mg(2+). L-aspartate-binding residues include Ser-458 and Arg-462. ATP is bound at residue Gly-503–Arg-506.

Belongs to the class-II aminoacyl-tRNA synthetase family. Type 2 subfamily.

It localises to the cytoplasm. Its subcellular location is the cytosol. It carries out the reaction tRNA(Asp) + L-aspartate + ATP = L-aspartyl-tRNA(Asp) + AMP + diphosphate. Its function is as follows. Catalyzes the specific attachment of an amino acid to its cognate tRNA in a 2 step reaction: the amino acid (AA) is first activated by ATP to form AA-AMP and then transferred to the acceptor end of the tRNA. In Arabidopsis thaliana (Mouse-ear cress), this protein is Aspartate--tRNA ligase 1, cytoplasmic.